The chain runs to 324 residues: Beta-ketoacyl-[acyl-carrier-protein] synthase III (324 aa).

Active-site residues include Cys112 and His249. Residues 250–254 (QANRR) are ACP-binding. Asn279 is an active-site residue.

The protein belongs to the thiolase-like superfamily. FabH family. In terms of assembly, homodimer.

The protein resides in the cytoplasm. It carries out the reaction malonyl-[ACP] + acetyl-CoA + H(+) = 3-oxobutanoyl-[ACP] + CO2 + CoA. It participates in lipid metabolism; fatty acid biosynthesis. Functionally, catalyzes the condensation reaction of fatty acid synthesis by the addition to an acyl acceptor of two carbons from malonyl-ACP. Catalyzes the first condensation reaction which initiates fatty acid synthesis and may therefore play a role in governing the total rate of fatty acid production. Possesses both acetoacetyl-ACP synthase and acetyl transacylase activities. Its substrate specificity determines the biosynthesis of branched-chain and/or straight-chain of fatty acids. This Streptococcus pyogenes serotype M49 (strain NZ131) protein is Beta-ketoacyl-[acyl-carrier-protein] synthase III.